Reading from the N-terminus, the 479-residue chain is MESGSEEPDEQLLLLSEPALHAGPPAGRAAPGGAVRLRGEPGLEEEEEGEEDSGPEGDGEEEPLLRASGRGRRAGAARDKEPRVGAGHTGHAIDMNTFLDDPEFAEIITRAEQVIECGVLPERISQGSSGSYFVKDCKGKTIGVFKPKSEEPYGHLNPKWTKYFHKICCPCCFGRGCLVPNQGYLSEAGAYLVDDKLGLGVVPKTKVVWLVSETFNYSAIDRAKSRGKKYALEKVPKVAKKFNRIGLPPKVGSFQLFVEGYKEADYWLRKFETDPLPENTRKEFQSQFERLVILDYVIRNTDRGNDNWLVRYEKQDDGLNLSDKDIQWTVTEESTIKIAAIDNGLAFPFKHPDEWRAYPFHWAWLSQAQVPFSQETRDLVLPRISDMNFVQDLCEDLHELFKTDKGFDKATFENQMSVMRGQILNLTQALKDGKSPIQLVQMPRVIVERSSTGSQGRIVHLSNAFTQTFHSRKPFFSSW.

A compositionally biased stretch (acidic residues) spans 1 to 10 (MESGSEEPDE). Positions 1 to 91 (MESGSEEPDE…PRVGAGHTGH (91 aa)) are disordered. The span at 18-34 (PALHAGPPAGRAAPGGA) shows a compositional bias: low complexity. Positions 42-62 (GLEEEEEGEEDSGPEGDGEEE) are enriched in acidic residues. Residues 118-449 (GVLPERISQG…VQMPRVIVER (332 aa)) enclose the PI3K/PI4K catalytic domain. Residues 124-130 (ISQGSSG) form a G-loop region. Residues Ser-131 and Lys-146 each coordinate ATP. The tract at residues 151-153 (EPY) is important for substrate binding. An important for interaction with membranes region spans residues 159–172 (KWTKYFHKICCPCC). Residues 255–258 (QLFV) and 269–270 (RK) each bind ATP. The segment at 262–270 (KEADYWLRK) is important for interaction with membranes. Residues 299-307 (RNTDRGNDN) are catalytic loop. An activation loop region spans residues 340–360 (AIDNGLAFPFKHPDEWRAYPF). Position 342 (Asp-342) interacts with ATP. The interval 355-364 (WRAYPFHWAW) is important for interaction with membranes.

The protein belongs to the PI3/PI4-kinase family. Type II PI4K subfamily.

It localises to the cytoplasm. Its subcellular location is the cytosol. It is found in the golgi apparatus membrane. The protein localises to the endoplasmic reticulum membrane. The protein resides in the cell membrane. It localises to the early endosome membrane. The catalysed reaction is a 1,2-diacyl-sn-glycero-3-phospho-(1D-myo-inositol) + ATP = a 1,2-diacyl-sn-glycero-3-phospho-(1D-myo-inositol 4-phosphate) + ADP + H(+). Contributes to the overall PI4-kinase activity of the cell. This contribution may be especially significant in plasma membrane, endosomal and Golgi compartments. The phosphorylation of phosphatidylinositol (PI) to PI4P is the first committed step in the generation of phosphatidylinositol 4,5-bisphosphate (PIP2), a precursor of the second messenger inositol 1,4,5-trisphosphate (InsP3). This Gallus gallus (Chicken) protein is Phosphatidylinositol 4-kinase type 2-beta (PI4K2B).